The primary structure comprises 215 residues: NAD(P)H-hydrate epimerase (215 aa).

Residues 10–211 (AQRYDAHATN…DIGIYAQDRV (202 aa)) form the YjeF N-terminal domain. 58–62 (NNGGD) serves as a coordination point for (6S)-NADPHX. K(+) is bound by residues asparagine 59 and aspartate 121. (6S)-NADPHX contacts are provided by residues 125 to 131 (GVGLTRD) and aspartate 154. Serine 157 lines the K(+) pocket.

This sequence belongs to the NnrE/AIBP family. Requires K(+) as cofactor.

It carries out the reaction (6R)-NADHX = (6S)-NADHX. It catalyses the reaction (6R)-NADPHX = (6S)-NADPHX. Catalyzes the epimerization of the S- and R-forms of NAD(P)HX, a damaged form of NAD(P)H that is a result of enzymatic or heat-dependent hydration. This is a prerequisite for the S-specific NAD(P)H-hydrate dehydratase to allow the repair of both epimers of NAD(P)HX. The polypeptide is NAD(P)H-hydrate epimerase (Levilactobacillus brevis (strain ATCC 367 / BCRC 12310 / CIP 105137 / JCM 1170 / LMG 11437 / NCIMB 947 / NCTC 947) (Lactobacillus brevis)).